Reading from the N-terminus, the 342-residue chain is Methylthioribose-1-phosphate isomerase (342 aa).

Residues 49 to 51 (RGA), Arg86, and Gln187 contribute to the substrate site. Asp228 acts as the Proton donor in catalysis. Position 238–239 (238–239 (NK)) interacts with substrate.

The protein belongs to the eIF-2B alpha/beta/delta subunits family. MtnA subfamily.

The enzyme catalyses 5-(methylsulfanyl)-alpha-D-ribose 1-phosphate = 5-(methylsulfanyl)-D-ribulose 1-phosphate. It functions in the pathway amino-acid biosynthesis; L-methionine biosynthesis via salvage pathway; L-methionine from S-methyl-5-thio-alpha-D-ribose 1-phosphate: step 1/6. Functionally, catalyzes the interconversion of methylthioribose-1-phosphate (MTR-1-P) into methylthioribulose-1-phosphate (MTRu-1-P). The protein is Methylthioribose-1-phosphate isomerase of Enterobacter sp. (strain 638).